We begin with the raw amino-acid sequence, 606 residues long: Aspartate--tRNA(Asp/Asn) ligase (606 aa).

Glu-177 contributes to the L-aspartate binding site. Residues 201–204 (QIFK) form an aspartate region. An L-aspartate-binding site is contributed by Arg-223. ATP is bound by residues 223–225 (RDE) and Gln-232. His-461 provides a ligand contact to L-aspartate. Glu-499 provides a ligand contact to ATP. Position 506 (Arg-506) interacts with L-aspartate. An ATP-binding site is contributed by 551 to 554 (GLDR).

The protein belongs to the class-II aminoacyl-tRNA synthetase family. Type 1 subfamily. In terms of assembly, homodimer.

Its subcellular location is the cytoplasm. It carries out the reaction tRNA(Asx) + L-aspartate + ATP = L-aspartyl-tRNA(Asx) + AMP + diphosphate. In terms of biological role, aspartyl-tRNA synthetase with relaxed tRNA specificity since it is able to aspartylate not only its cognate tRNA(Asp) but also tRNA(Asn). Reaction proceeds in two steps: L-aspartate is first activated by ATP to form Asp-AMP and then transferred to the acceptor end of tRNA(Asp/Asn). In Prochlorococcus marinus (strain MIT 9211), this protein is Aspartate--tRNA(Asp/Asn) ligase.